Here is a 347-residue protein sequence, read N- to C-terminus: Twinfilin-2 (347 aa).

ADF-H domains follow at residues 3–137 (LVLV…RHIT) and 175–311 (GLAF…DEVH). The interval 314-347 (QHAHKQAFAKPRGPAGKRGNKRLIKGGGENGGNS) is disordered. Residues 338 to 347 (KGGGENGGNS) show a composition bias toward gly residues.

The protein belongs to the actin-binding proteins ADF family. Twinfilin subfamily. Interacts with G-actin; ADP-actin form and capping protein (CP).

It is found in the cytoplasm. Its subcellular location is the cytoskeleton. The protein localises to the perinuclear region. Its function is as follows. Actin-binding protein involved in motile and morphological processes. Inhibits actin polymerization, likely by sequestering G-actin. This Danio rerio (Zebrafish) protein is Twinfilin-2 (twf2).